A 116-amino-acid polypeptide reads, in one-letter code: T cell receptor alpha variable 38-1 (116 aa).

A signal peptide spans 1–21 (MTRVSLLWAVVVSTCLESGMA). The Ig-like domain occupies 22-116 (QTVTQSQPEM…TAMYFCAFMK (95 aa)). C43 and C112 are disulfide-bonded. N78 is a glycosylation site (N-linked (GlcNAc...) asparagine).

Alpha-beta TR is a heterodimer composed of an alpha and beta chain; disulfide-linked. The alpha-beta TR is associated with the transmembrane signaling CD3 coreceptor proteins to form the TR-CD3 (TcR or TCR). The assembly of alpha-beta TR heterodimers with CD3 occurs in the endoplasmic reticulum where a single alpha-beta TR heterodimer associates with one CD3D-CD3E heterodimer, one CD3G-CD3E heterodimer and one CD247 homodimer forming a stable octameric structure. CD3D-CD3E and CD3G-CD3E heterodimers preferentially associate with TR alpha and TR beta chains, respectively. The association of the CD247 homodimer is the last step of TcR assembly in the endoplasmic reticulum and is required for transport to the cell surface.

Its subcellular location is the cell membrane. V region of the variable domain of T cell receptor (TR) alpha chain that participates in the antigen recognition. Alpha-beta T cell receptors are antigen specific receptors which are essential to the immune response and are present on the cell surface of T lymphocytes. Recognize peptide-major histocompatibility (MH) (pMH) complexes that are displayed by antigen presenting cells (APC), a prerequisite for efficient T cell adaptive immunity against pathogens. Binding of alpha-beta TR to pMH complex initiates TR-CD3 clustering on the cell surface and intracellular activation of LCK that phosphorylates the ITAM motifs of CD3G, CD3D, CD3E and CD247 enabling the recruitment of ZAP70. In turn ZAP70 phosphorylates LAT, which recruits numerous signaling molecules to form the LAT signalosome. The LAT signalosome propagates signal branching to three major signaling pathways, the calcium, the mitogen-activated protein kinase (MAPK) kinase and the nuclear factor NF-kappa-B (NF-kB) pathways, leading to the mobilization of transcription factors that are critical for gene expression and essential for T cell growth and differentiation. The T cell repertoire is generated in the thymus, by V-(D)-J rearrangement. This repertoire is then shaped by intrathymic selection events to generate a peripheral T cell pool of self-MH restricted, non-autoaggressive T cells. Post-thymic interaction of alpha-beta TR with the pMH complexes shapes TR structural and functional avidity. In Homo sapiens (Human), this protein is T cell receptor alpha variable 38-1.